The sequence spans 153 residues: Transthyretin (153 aa).

A signal peptide spans 1-19 (MASFKSFLLLALLAIVSEA). Residue C34 is modified to Sulfocysteine. L-thyroxine contacts are provided by K39 and E78. N-linked (GlcNAc...) asparagine glycosylation occurs at N81. S141 provides a ligand contact to L-thyroxine.

Belongs to the transthyretin family. In terms of assembly, homotetramer. Dimer of dimers. In the homotetramer, subunits assemble around a central channel that can accommodate two ligand molecules. Interacts with rbp4. In terms of processing, sulfonation of the reactive cysteine Cys-34 enhances the stability of the native conformation of TTR, avoiding misassembly of the protein leading to amyloid formation. In terms of tissue distribution, detected in plasma (at protein level). Expressed during metamorphosis in tadpole liver, but not in tadpole brain nor adult liver. Between 1.5 and 3 days of development, also expressed in the mesoderm of the kidney.

The protein localises to the secreted. In terms of biological role, thyroid hormone-binding protein, with a much higher binding affinity for triiodothyronine (T3) than for thyroxine (T4). Probably transports triiodothyronine from the bloodstream to the brain. The protein is Transthyretin (ttr) of Xenopus laevis (African clawed frog).